A 253-amino-acid chain; its full sequence is 3-deoxy-manno-octulosonate cytidylyltransferase (253 aa).

This sequence belongs to the KdsB family.

It is found in the cytoplasm. It carries out the reaction 3-deoxy-alpha-D-manno-oct-2-ulosonate + CTP = CMP-3-deoxy-beta-D-manno-octulosonate + diphosphate. It participates in nucleotide-sugar biosynthesis; CMP-3-deoxy-D-manno-octulosonate biosynthesis; CMP-3-deoxy-D-manno-octulosonate from 3-deoxy-D-manno-octulosonate and CTP: step 1/1. The protein operates within bacterial outer membrane biogenesis; lipopolysaccharide biosynthesis. In terms of biological role, activates KDO (a required 8-carbon sugar) for incorporation into bacterial lipopolysaccharide in Gram-negative bacteria. This Neisseria meningitidis serogroup A / serotype 4A (strain DSM 15465 / Z2491) protein is 3-deoxy-manno-octulosonate cytidylyltransferase.